We begin with the raw amino-acid sequence, 243 residues long: MDVHDLTRAPPEYLEVVWVTDVCKLVMAVGWLSNYIGMIAKSIKEQTYSMALMPLCCNFAWEFTYFFIYPYKVPMERNIHTLAFLLNCGVMYTAVRYGAREWGHAPLVQRNLPVIFVVCIACWVSAHVAFAEQYGPSLAQAVSGFACQILLSAGGTCQLLCRGHSRGASYKLWLARFMGSFALILPNMLRYKYWRDDHQYIGSPLYIWFLGMFLFLDGSYGFVLWYVRRHEREQVLVAKPKVQ.

A run of 7 helical transmembrane segments spans residues 16–36, 50–70, 79–99, 112–132, 141–161, 172–189, and 207–227; these read VVWVTDVCKLVMAVGWLSNYI, MALMPLCCNFAWEFTYFFIYP, IHTLAFLLNCGVMYTAVRYGA, LPVIFVVCIACWVSAHVAFAE, AVSGFACQILLSAGGTCQLLC, LWLARFMGSFALILPNML, and IWFLGMFLFLDGSYGFVLWYV.

Belongs to the paxB family.

It is found in the membrane. It participates in secondary metabolite biosynthesis; terpenoid biosynthesis. Functionally, terpene cyclase; part of the gene cluster that mediates the biosynthesis of the diterpenoid pyrones subglutinols A and B. The first step of the pathway is the synthesis of the alpha-pyrone moiety by the polyketide synthase dpasA via condensation of one acetyl-CoA starter unit with 3 malonyl-CoA units and 2 methylations. The alpha-pyrone is then combined with geranylgeranyl pyrophosphate (GGPP) formed by the GGPP synthase dpasD through the action of the prenyltransferase dpasC to yield a linear alpha-pyrone diterpenoid. Subsequent steps in the diterpenoid pyrone biosynthetic pathway involve the decalin core formation, which is initiated by the epoxidation of the C10-C11 olefin by the FAD-dependent oxidoreductase dpasE, and is followed by a cyclization cascade catalyzed by the terpene cyclase dpasB. The FAD-linked oxidoreductase dpasF is then involved in tetrahydrofuran (THF) ring formation at the C5 unit to complete the formation of subglutinols A and B. DpasF possesses also an additional catalytic ability of multi-step oxidations to generate a new DDP analog with an enone system at the C5 named FDDP A. This Apiospora sacchari (Arthrinium sacchari) protein is Terpene cyclase dpasB.